A 111-amino-acid chain; its full sequence is Irditoxin subunit B (111 aa).

The first 19 residues, 1–19 (MKTLLLAVAVVAFVCLGSA), serve as a signal peptide directing secretion. Positions 20–34 (DQLGLGRQQIDWGKG) are excised as a propeptide. Q35 is subject to Pyrrolidone carboxylic acid. Intrachain disulfides connect C44–C68, C47–C55, C61–C87, C91–C102, and C103–C108.

This sequence belongs to the three-finger toxin family. Ancestral subfamily. Boigatoxin sub-subfamily. As to quaternary structure, heterodimer of A and B chains; disulfide-linked. In terms of tissue distribution, expressed by the venom gland.

It is found in the secreted. In terms of biological role, this bird and reptile-specific postsynaptic neurotoxin inhibits the chick muscle alpha-1-beta-1-gamma-delta (CHRNA1-CHRNB1-CHRNG-CHRND) nicotinic acetylcholine receptor (nAChR) 100-fold more compared with the mouse receptor. In vivo, produces rapid flaccid paralysis, dyspnea and increased respiratory rate in geckos. At sublethal doses geckos were immobilized for up to three days and then recovered. Chicks injected with lethal doses showed rapid onset of inactivity, dyspnea and neck droop, and no extended paralysis with survival was seen. The sequence is that of Irditoxin subunit B from Boiga irregularis (Brown tree snake).